Reading from the N-terminus, the 550-residue chain is Leucine-rich repeat LGI family member 2 (550 aa).

The N-terminal stretch at 1-25 (MALWRGGGALGLLLLSAACLIPPSA) is a signal peptide. Positions 26–62 (QVRRLARCPATCSCTKESIICVGSSWVPRIVPGDISS) constitute an LRRNT domain. A glycan (N-linked (GlcNAc...) asparagine) is linked at asparagine 67. 2 LRR repeats span residues 83–104 (SLQL…AFAG) and 107–128 (HLEY…AFRG). An LRRCT domain is found at 140 to 190 (NKFECDCKAKWLYLWLKMTNSTVSDVLCIGPPEYQEKKLNEVTSFDYECTT). Asparagine 159 carries an N-linked (GlcNAc...) asparagine glycan. EAR repeat units lie at residues 224-266 (DFVV…EWDH), 270-312 (NFRS…KYDE), 316-363 (KFVK…KWNS), 365-408 (GFYS…QWNK), 412-455 (KFVP…RWNS), 457-499 (QFVE…QWDK), and 503-545 (QFKK…EHII). N-linked (GlcNAc...) asparagine glycosylation is present at asparagine 276. The N-linked (GlcNAc...) asparagine glycan is linked to asparagine 407.

In terms of tissue distribution, brain.

It is found in the secreted. Its function is as follows. Required for the development of soma-targeting inhibitory GABAergic synapses made by parvalbumin-positive basket cells. This Mus musculus (Mouse) protein is Leucine-rich repeat LGI family member 2 (Lgi2).